Consider the following 675-residue polypeptide: MVAREGGPAPADAAQRIAELREQIRRHDYCYYVLDAPEISDAEYDRLMRELLDLEQSHPELVTADSPSQRVGGQPLAAFRAVSHRVPLLSLANAVDDQDLREFDRRARERADRPLTYVVEPKIDGLTVVLSYEEGRFIRAATRGDGLIGEDITENIKTVRAVPLRLKRDIKSLEVRGEAYLPKAAFARLNEEREEAGEAAFANPRNAAAGSLRQLDPKVTASRPLRAYFYNILHLEGADGVGEQVEALQMLEDLGLPVNPERRYCRTIDDVIDYCRYWTEHRHDLPYEIDGMVVKVNELDQYPLLGETAKSPRYAIAFKFPPEQAITRVRDITVKVGRTGVITPTAELEPVRLAGTTVSRATLHNEDIIRERDIHIGDYVVIQKAGDIIPEVLSVLKEKRTGEERPFFMPQTCPECHSPVSRLKGEAAIRCTSLACPAQAKEGLIHFASRDAMNIEGLGPAVVNLLWEAGLVRDPADLYDLTAEQVAPLERMGKKSAANLIAAIENSKSRGLAALIFALGIRLVGQTAAKTLARHFGSMDQLMKATTEELQAVSEIGPKMAESLQRWFAVPANRQMIDRLAEKGLQMETEKAGDAGVPQTFAGKTVVLTGTLTTLDRREAQRLLEERGAKVASSVSKKTSLVIAGEAAGSKLEKAKELNIPILSEADFLQLIDRV.

NAD(+)-binding positions include 41-45 (DAEYD), 90-91 (SL), and Glu120. Lys122 acts as the N6-AMP-lysine intermediate in catalysis. NAD(+)-binding residues include Arg143, Glu178, Lys295, and Lys319. Cys413, Cys416, Cys431, and Cys436 together coordinate Zn(2+). Residues 596–675 (GVPQTFAGKT…ADFLQLIDRV (80 aa)) enclose the BRCT domain.

The protein belongs to the NAD-dependent DNA ligase family. LigA subfamily. It depends on Mg(2+) as a cofactor. The cofactor is Mn(2+).

The enzyme catalyses NAD(+) + (deoxyribonucleotide)n-3'-hydroxyl + 5'-phospho-(deoxyribonucleotide)m = (deoxyribonucleotide)n+m + AMP + beta-nicotinamide D-nucleotide.. Functionally, DNA ligase that catalyzes the formation of phosphodiester linkages between 5'-phosphoryl and 3'-hydroxyl groups in double-stranded DNA using NAD as a coenzyme and as the energy source for the reaction. It is essential for DNA replication and repair of damaged DNA. This chain is DNA ligase, found in Heliobacterium modesticaldum (strain ATCC 51547 / Ice1).